Consider the following 451-residue polypeptide: Trigger factor (451 aa).

Residues 171–256 (GDRVKVNFKG…ATAIEAPEDK (86 aa)) form the PPIase FKBP-type domain.

The protein belongs to the FKBP-type PPIase family. Tig subfamily.

Its subcellular location is the cytoplasm. The enzyme catalyses [protein]-peptidylproline (omega=180) = [protein]-peptidylproline (omega=0). Its function is as follows. Involved in protein export. Acts as a chaperone by maintaining the newly synthesized protein in an open conformation. Functions as a peptidyl-prolyl cis-trans isomerase. This is Trigger factor from Bradyrhizobium sp. (strain ORS 278).